A 242-amino-acid chain; its full sequence is 1-(5-phosphoribosyl)-5-[(5-phosphoribosylamino)methylideneamino] imidazole-4-carboxamide isomerase (242 aa).

Asp-10 (proton acceptor) is an active-site residue. Asp-131 serves as the catalytic Proton donor.

The protein belongs to the HisA/HisF family.

It localises to the cytoplasm. The catalysed reaction is 1-(5-phospho-beta-D-ribosyl)-5-[(5-phospho-beta-D-ribosylamino)methylideneamino]imidazole-4-carboxamide = 5-[(5-phospho-1-deoxy-D-ribulos-1-ylimino)methylamino]-1-(5-phospho-beta-D-ribosyl)imidazole-4-carboxamide. The protein operates within amino-acid biosynthesis; L-histidine biosynthesis; L-histidine from 5-phospho-alpha-D-ribose 1-diphosphate: step 4/9. This is 1-(5-phosphoribosyl)-5-[(5-phosphoribosylamino)methylideneamino] imidazole-4-carboxamide isomerase from Granulibacter bethesdensis (strain ATCC BAA-1260 / CGDNIH1).